Consider the following 195-residue polypeptide: Glycerol-3-phosphate acyltransferase (195 aa).

The next 4 helical transmembrane spans lie at 2–22 (INLL…SFIV), 79–99 (AALM…LLGF), 111–131 (VALI…VVIL), and 146–166 (TILP…GLVL).

It belongs to the PlsY family. As to quaternary structure, probably interacts with PlsX.

Its subcellular location is the cell membrane. The enzyme catalyses an acyl phosphate + sn-glycerol 3-phosphate = a 1-acyl-sn-glycero-3-phosphate + phosphate. The protein operates within lipid metabolism; phospholipid metabolism. In terms of biological role, catalyzes the transfer of an acyl group from acyl-phosphate (acyl-PO(4)) to glycerol-3-phosphate (G3P) to form lysophosphatidic acid (LPA). This enzyme utilizes acyl-phosphate as fatty acyl donor, but not acyl-CoA or acyl-ACP. This Alkaliphilus metalliredigens (strain QYMF) protein is Glycerol-3-phosphate acyltransferase.